Reading from the N-terminus, the 478-residue chain is Ribosomal RNA small subunit methyltransferase F (478 aa).

Residues 121–127 (ASAPGSK), Glu-145, Asp-172, and Asp-190 contribute to the S-adenosyl-L-methionine site. The active-site Nucleophile is the Cys-243.

Belongs to the class I-like SAM-binding methyltransferase superfamily. RsmB/NOP family.

Its subcellular location is the cytoplasm. It carries out the reaction cytidine(1407) in 16S rRNA + S-adenosyl-L-methionine = 5-methylcytidine(1407) in 16S rRNA + S-adenosyl-L-homocysteine + H(+). Functionally, specifically methylates the cytosine at position 1407 (m5C1407) of 16S rRNA. The sequence is that of Ribosomal RNA small subunit methyltransferase F from Shewanella woodyi (strain ATCC 51908 / MS32).